We begin with the raw amino-acid sequence, 312 residues long: Olfactory receptor OR51C1 (312 aa).

Over 1 to 26 (MGSNITSTSIIFLLTGVPGLEAFHTW) the chain is Extracellular. The helical transmembrane segment at 27-47 (ISIPFCFLSVTALLGNSLILF) threads the bilayer. The Cytoplasmic portion of the chain corresponds to 48-66 (ATITQPSLHEPMYYFLSML). The chain crosses the membrane as a helical span at residues 67 to 87 (SATDLGLSISTLVTMLSIFWF). The Extracellular segment spans residues 88 to 99 (NVREISFNACLS). A disulfide bridge connects residues cysteine 97 and cysteine 179. The chain crosses the membrane as a helical span at residues 100–120 (HMFFIKFFTVMESSVLLAMAF). Residues 121–143 (DRFVAVSNPLRYAMILTDSRIAQ) lie on the Cytoplasmic side of the membrane. A helical transmembrane segment spans residues 144-164 (IGVASVIRGLLMLTPMVALLI). The Extracellular segment spans residues 165–201 (RLSYCHSQVLHHSYCYHPDVMKLSCTDTRINSAVGLT). A helical membrane pass occupies residues 202–222 (AMFSTVGVDLLLILLSYVLII). Over 223–240 (RTVLSVASPEERKETFST) the chain is Cytoplasmic. A helical membrane pass occupies residues 241–261 (CVSHIVAFAIYYIPLISLSIV). Residues 262-273 (HRFGKQAPAYVH) are Extracellular-facing. A helical membrane pass occupies residues 274-294 (TMIANTYLLISPLMNPVIYSV). Over 295–312 (KTKQIRRAVIKILHSKET) the chain is Cytoplasmic.

It belongs to the G-protein coupled receptor 1 family.

It is found in the membrane. Odorant receptor. The sequence is that of Olfactory receptor OR51C1 from Homo sapiens (Human).